A 286-amino-acid chain; its full sequence is Energy-coupling factor transporter ATP-binding protein EcfA2 (286 aa).

The 244-residue stretch at 3–246 (IRFDNVSYTY…KEKLADWHIG (244 aa)) folds into the ABC transporter domain. 40-47 (GQTGSGKS) serves as a coordination point for ATP.

Belongs to the ABC transporter superfamily. Energy-coupling factor EcfA family. As to quaternary structure, forms a stable energy-coupling factor (ECF) transporter complex composed of 2 membrane-embedded substrate-binding proteins (S component), 2 ATP-binding proteins (A component) and 2 transmembrane proteins (T component).

It is found in the cell membrane. Functionally, ATP-binding (A) component of a common energy-coupling factor (ECF) ABC-transporter complex. Unlike classic ABC transporters this ECF transporter provides the energy necessary to transport a number of different substrates. In Staphylococcus aureus (strain MRSA252), this protein is Energy-coupling factor transporter ATP-binding protein EcfA2.